The sequence spans 589 residues: Bifunctional protein TrpGD (589 aa).

Positions 46–241 constitute a Glutamine amidotransferase type-1 domain; that stretch reads RVIVIDNYDS…LNIQDIQVKK (196 aa). Residue 99-101 participates in L-glutamine binding; the sequence is GPG. C126 acts as the Nucleophile; for GATase activity in catalysis. Residues Q130 and 176 to 177 contribute to the L-glutamine site; that span reads SL. Residues H215 and E217 each act as for GATase activity in the active site. The segment at 253-589 is anthranilate phosphoribosyltransferase; the sequence is ALKKLVEFED…MDYQKTLGNS (337 aa).

The protein in the C-terminal section; belongs to the anthranilate phosphoribosyltransferase family. Heterotetramer consisting of two non-identical subunits: a beta subunit (TrpG) and a large alpha subunit (TrpE).

It catalyses the reaction chorismate + L-glutamine = anthranilate + pyruvate + L-glutamate + H(+). It carries out the reaction N-(5-phospho-beta-D-ribosyl)anthranilate + diphosphate = 5-phospho-alpha-D-ribose 1-diphosphate + anthranilate. Its pathway is amino-acid biosynthesis; L-tryptophan biosynthesis; L-tryptophan from chorismate: step 1/5. It participates in amino-acid biosynthesis; L-tryptophan biosynthesis; L-tryptophan from chorismate: step 2/5. Part of a heterotetrameric complex that catalyzes the two-step biosynthesis of anthranilate, an intermediate in the biosynthesis of L-tryptophan. In the first step, the glutamine-binding beta subunit (TrpG) of anthranilate synthase (AS) provides the glutamine amidotransferase activity which generates ammonia as a substrate that, along with chorismate, is used in the second step, catalyzed by the large alpha subunit of AS (TrpE) to produce anthranilate. In the absence of TrpG, TrpE can synthesize anthranilate directly from chorismate and high concentrations of ammonia. In addition to synthesizing anthranilate, it also catalyzes the second step of the pathway, the transfer of the phosphoribosyl group of 5-phosphorylribose-1-pyrophosphate (PRPP) to anthranilate. The sequence is that of Bifunctional protein TrpGD (trpGD) from Thermotoga maritima (strain ATCC 43589 / DSM 3109 / JCM 10099 / NBRC 100826 / MSB8).